A 349-amino-acid polypeptide reads, in one-letter code: Aspartate carbamoyltransferase catalytic subunit (349 aa).

Carbamoyl phosphate contacts are provided by R59 and T60. L-aspartate is bound at residue K87. Carbamoyl phosphate is bound by residues R109, H142, and Q145. L-aspartate is bound by residues R182 and R253. Carbamoyl phosphate is bound by residues G294 and P295.

The protein belongs to the aspartate/ornithine carbamoyltransferase superfamily. ATCase family. Heterododecamer (2C3:3R2) of six catalytic PyrB chains organized as two trimers (C3), and six regulatory PyrI chains organized as three dimers (R2).

It carries out the reaction carbamoyl phosphate + L-aspartate = N-carbamoyl-L-aspartate + phosphate + H(+). Its pathway is pyrimidine metabolism; UMP biosynthesis via de novo pathway; (S)-dihydroorotate from bicarbonate: step 2/3. In terms of biological role, catalyzes the condensation of carbamoyl phosphate and aspartate to form carbamoyl aspartate and inorganic phosphate, the committed step in the de novo pyrimidine nucleotide biosynthesis pathway. The polypeptide is Aspartate carbamoyltransferase catalytic subunit (Synechococcus sp. (strain CC9605)).